A 388-amino-acid chain; its full sequence is Succinate--CoA ligase [ADP-forming] subunit beta (388 aa).

In terms of domain architecture, ATP-grasp spans 9–244 (KQLFAEYGLP…PSQEDEREAH (236 aa)). ATP-binding positions include K46, 53–55 (GRG), E99, T102, and E107. The Mg(2+) site is built by N199 and D213. Residues N264 and 321-323 (GIV) contribute to the substrate site.

Belongs to the succinate/malate CoA ligase beta subunit family. As to quaternary structure, heterotetramer of two alpha and two beta subunits. The cofactor is Mg(2+).

It catalyses the reaction succinate + ATP + CoA = succinyl-CoA + ADP + phosphate. It carries out the reaction GTP + succinate + CoA = succinyl-CoA + GDP + phosphate. Its pathway is carbohydrate metabolism; tricarboxylic acid cycle; succinate from succinyl-CoA (ligase route): step 1/1. In terms of biological role, succinyl-CoA synthetase functions in the citric acid cycle (TCA), coupling the hydrolysis of succinyl-CoA to the synthesis of either ATP or GTP and thus represents the only step of substrate-level phosphorylation in the TCA. The beta subunit provides nucleotide specificity of the enzyme and binds the substrate succinate, while the binding sites for coenzyme A and phosphate are found in the alpha subunit. The sequence is that of Succinate--CoA ligase [ADP-forming] subunit beta from Marinomonas sp. (strain MWYL1).